The chain runs to 119 residues: NADH dehydrogenase [ubiquinone] 1 subunit C2 (119 aa).

The helical transmembrane segment at 56–75 threads the bilayer; sequence GLHRQLLYITAFFFAGYYLV.

The protein belongs to the complex I NDUFC2 subunit family. In terms of assembly, complex I is composed of 45 different subunits. Interacts with TMEM242.

It localises to the mitochondrion inner membrane. In terms of biological role, accessory subunit of the mitochondrial membrane respiratory chain NADH dehydrogenase (Complex I), that is believed not to be involved in catalysis but required for the complex assembly. Complex I functions in the transfer of electrons from NADH to the respiratory chain. The immediate electron acceptor for the enzyme is believed to be ubiquinone. The sequence is that of NADH dehydrogenase [ubiquinone] 1 subunit C2 from Gorilla gorilla gorilla (Western lowland gorilla).